The primary structure comprises 678 residues: DNA gyrase subunit B (678 aa).

A Toprim domain is found at 456–570; it reads SELYVVEGDS…HGYVFLAQPP (115 aa). Glu462, Asp535, and Asp537 together coordinate Mg(2+).

This sequence belongs to the type II topoisomerase GyrB family. Heterotetramer, composed of two GyrA and two GyrB chains. In the heterotetramer, GyrA contains the active site tyrosine that forms a transient covalent intermediate with the DNA, while GyrB binds cofactors catalyzes ATP hydrolysis. Mg(2+) is required as a cofactor. The cofactor is Mn(2+). It depends on Ca(2+) as a cofactor.

Its subcellular location is the cytoplasm. It carries out the reaction ATP-dependent breakage, passage and rejoining of double-stranded DNA.. DNA supercoiling is inhibited by fluoroquinolones; IC(50) 1 ug/ml for sitafloxacin. Functionally, a type II topoisomerase that negatively supercoils closed circular double-stranded (ds) DNA in an ATP-dependent manner to modulate DNA topology and maintain chromosomes in an underwound state. Negative supercoiling favors strand separation, and DNA replication, transcription, recombination and repair, all of which involve strand separation. Also able to catalyze the interconversion of other topological isomers of dsDNA rings, including catenanes and knotted rings. Type II topoisomerases break and join 2 DNA strands simultaneously in an ATP-dependent manner. This is DNA gyrase subunit B from Mycobacterium leprae (strain TN).